Here is a 156-residue protein sequence, read N- to C-terminus: Small ribosomal subunit protein uS7 (156 aa).

This sequence belongs to the universal ribosomal protein uS7 family. Part of the 30S ribosomal subunit. Contacts proteins S9 and S11.

Functionally, one of the primary rRNA binding proteins, it binds directly to 16S rRNA where it nucleates assembly of the head domain of the 30S subunit. Is located at the subunit interface close to the decoding center, probably blocks exit of the E-site tRNA. This is Small ribosomal subunit protein uS7 from Synechococcus elongatus (strain ATCC 33912 / PCC 7942 / FACHB-805) (Anacystis nidulans R2).